The chain runs to 355 residues: uncharacterized protein (355 aa).

This sequence belongs to the carbohydrate kinase PfkB family.

This is an uncharacterized protein from Dictyostelium discoideum (Social amoeba).